The following is a 322-amino-acid chain: Probable 2-oxoglutarate-dependent dioxygenase AOP1 (322 aa).

A Fe2OG dioxygenase domain is found at 165–271 (TYYLTRLMKY…RYSTGLFSIP (107 aa)). Fe cation is bound by residues histidine 195, aspartate 197, and histidine 252. 2-oxoglutarate is bound at residue arginine 262.

It belongs to the iron/ascorbate-dependent oxidoreductase family. Requires Fe(2+) as cofactor.

Its function is as follows. Probable 2-oxoglutarate-dependent dioxygenase that may be involved in glucosinolates biosynthesis. May play a role in the production of aliphatic glucosinolates. The chain is Probable 2-oxoglutarate-dependent dioxygenase AOP1 (AOP1) from Arabidopsis thaliana (Mouse-ear cress).